Here is a 194-residue protein sequence, read N- to C-terminus: MGYGNIMNVETTGASWQTAQQDKLGYSGVRASHTMANTDSGRMERYRSKINSVGAKYGIDPALIAAIISEESRAGNVLHDGWGDYDSNRGAYNAWGLMQVDVNPNGGGHTARGAWDSEEHLSQGAEILVYFIGRIRNKFPGWNTEQQLKGGIAAYNMGDGNVHSYDNVDGRTTGGDYSNDVVARAQWYKTQKGF.

Catalysis depends on residues Glu71 and Asp84.

The protein belongs to the glycosyl hydrolase 23 family. As to expression, expressed in intestine, liver, spleen, anterior kidney, posterior kidney, heart, gill, muscle and leukocytes.

It catalyses the reaction Hydrolysis of (1-&gt;4)-beta-linkages between N-acetylmuramic acid and N-acetyl-D-glucosamine residues in a peptidoglycan and between N-acetyl-D-glucosamine residues in chitodextrins.. In terms of biological role, has lytic activity against M.lysodeikticus, V.alginolyticus from Epinephelus fario, V.vulnificus from culture water, A.hydrophila from soft-shell turtle, A.hydrophila from goldfish and V.parahaemolyticus, P.fluorescens and V.fluvialis from culture water. The protein is Lysozyme g of Epinephelus coioides (Orange-spotted grouper).